The sequence spans 338 residues: Ketol-acid reductoisomerase (NADP(+)) (338 aa).

In terms of domain architecture, KARI N-terminal Rossmann spans 1–181 (MRVFYDKDCD…GGGRTGIIET (181 aa)). NADP(+)-binding positions include 24 to 27 (YGSQ), Arg-47, Ser-50, Thr-52, and 82 to 85 (DEFQ). His-107 is an active-site residue. Gly-133 provides a ligand contact to NADP(+). The KARI C-terminal knotted domain maps to 182–327 (TFKDETETDL…EKLRAMMPWI (146 aa)). Residues Asp-190, Glu-194, Glu-226, and Glu-230 each coordinate Mg(2+). Ser-251 lines the substrate pocket.

It belongs to the ketol-acid reductoisomerase family. Requires Mg(2+) as cofactor.

It carries out the reaction (2R)-2,3-dihydroxy-3-methylbutanoate + NADP(+) = (2S)-2-acetolactate + NADPH + H(+). It catalyses the reaction (2R,3R)-2,3-dihydroxy-3-methylpentanoate + NADP(+) = (S)-2-ethyl-2-hydroxy-3-oxobutanoate + NADPH + H(+). The protein operates within amino-acid biosynthesis; L-isoleucine biosynthesis; L-isoleucine from 2-oxobutanoate: step 2/4. It functions in the pathway amino-acid biosynthesis; L-valine biosynthesis; L-valine from pyruvate: step 2/4. Involved in the biosynthesis of branched-chain amino acids (BCAA). Catalyzes an alkyl-migration followed by a ketol-acid reduction of (S)-2-acetolactate (S2AL) to yield (R)-2,3-dihydroxy-isovalerate. In the isomerase reaction, S2AL is rearranged via a Mg-dependent methyl migration to produce 3-hydroxy-3-methyl-2-ketobutyrate (HMKB). In the reductase reaction, this 2-ketoacid undergoes a metal-dependent reduction by NADPH to yield (R)-2,3-dihydroxy-isovalerate. This chain is Ketol-acid reductoisomerase (NADP(+)), found in Pseudomonas aeruginosa (strain LESB58).